The primary structure comprises 50 residues: Sperm protamine P1 (50 aa).

Belongs to the protamine P1 family. As to quaternary structure, cross-linked by interchain disulfide bonds around the DNA-helix. Testis.

It localises to the nucleus. It is found in the chromosome. In terms of biological role, protamines substitute for histones in the chromatin of sperm during the haploid phase of spermatogenesis. They compact sperm DNA into a highly condensed, stable and inactive complex. This is Sperm protamine P1 (PRM1) from Saguinus imperator (Emperor tamarin).